The following is a 98-amino-acid chain: Cystatin-B (98 aa).

N-acetylmethionine is present on M1. The Secondary area of contact motif lies at 46 to 50; the sequence is QLVAG.

It belongs to the cystatin family. As to quaternary structure, able to form dimers stabilized by noncovalent forces.

The protein localises to the cytoplasm. This is an intracellular thiol proteinase inhibitor. This is Cystatin-B (CSTB) from Bos taurus (Bovine).